Here is a 197-residue protein sequence, read N- to C-terminus: Recombination protein RecR (197 aa).

Residues 57–72 (CSVCFAITEDDPCWIC) form a C4-type zinc finger. The region spanning 79-174 (GTICVVEEPQ…KVTRLAHGIP (96 aa)) is the Toprim domain.

The protein belongs to the RecR family.

In terms of biological role, may play a role in DNA repair. It seems to be involved in an RecBC-independent recombinational process of DNA repair. It may act with RecF and RecO. The chain is Recombination protein RecR from Citrifermentans bemidjiense (strain ATCC BAA-1014 / DSM 16622 / JCM 12645 / Bem) (Geobacter bemidjiensis).